Here is a 660-residue protein sequence, read N- to C-terminus: Potassium voltage-gated channel subfamily KQT member 1 (660 aa).

The span at 1–18 (MSSEVKSRWSGSGSQKSG) shows a compositional bias: polar residues. The segment at 1–67 (MSSEVKSRWS…PESRAADSRA (67 aa)) is disordered. At 1–113 (MSSEVKSRWS…YNFLERPTGW (113 aa)) the chain is on the cytoplasmic side. Over residues 53–67 (STDKNPESRAADSRA) the composition is skewed to basic and acidic residues. Residues 114–135 (KCFIYHFTVFLIVLVCLIFSVM) traverse the membrane as a helical segment. Residues 136–146 (STIEQYHYFAN) are Extracellular-facing. The helical transmembrane segment at 147–169 (RALVWMEIVLVVFFGTEYIVRLW) threads the bilayer. At 170-185 (SAGCRSKYVGFWGRLR) the chain is on the cytoplasmic side. The chain crosses the membrane as a helical span at residues 186–211 (FARKPISIIDLIVVVASVIVLCVGSN). At 212-219 (GQVFATSA) the chain is on the extracellular side. The chain crosses the membrane as a helical; Voltage-sensor span at residues 220–235 (IRGIRFLQILRMLHVD). Residues 236–253 (RQGGTWRLLGSVVFIHRQ) are Cytoplasmic-facing. Gln-237 serves as a coordination point for a 1,2-diacyl-sn-glycero-3-phospho-(1D-myo-inositol-4,5-bisphosphate). The chain crosses the membrane as a helical span at residues 254 to 276 (ELITTLYIGFLGLIFSSYFVYLA). Residues 277-292 (EKDAVDDSGSQQFGSY) are Extracellular-facing. Positions 293 to 313 (ADALWWGVVTVTTIGYGDKVP) form an intramembrane region, pore-forming. At 314-315 (QT) the chain is on the extracellular side. A helical membrane pass occupies residues 316 to 341 (WIGRTIASCFSVFAISFFALPAGILG). At 342–660 (SGFALKVQQK…RKDQDNQPDL (319 aa)) the chain is on the cytoplasmic side. The disordered stretch occupies residues 399–426 (SPSPKTKKSVGKRKKLKTDKDNGLNSEK). Residues 403 to 415 (KTKKSVGKRKKLK) show a composition bias toward basic residues. Residues 579 to 615 (KNTIGARLNRVEEKFVHMDQKLNTITDMLHHLVAHQQ) are a coiled coil.

It belongs to the potassium channel family. KQT (TC 1.A.1.15) subfamily. Kv7.1/KCNQ1 sub-subfamily. Tetramer. Heterotetramer with KCNE1; targets to the membrane raft. Interacts (via C-terminus) with CALM; forms a heterotetramer in a calcium-independent manner. Interacts with KCNE2; form a heterooligomer complex that targets to the membrane raft and leading to currents with an apparently instantaneous activation, a rapid deactivation process and a linear current-voltage relationship and decreases the amplitude of the outward current. Interacts with KCNE3; four KCNE3 molecules are bound to one KCNQ1 tetramer (4:4 KCNQ1:KCNE3 stoichiometry); alters membrane raft localization; affects KCNQ1 structure and gating properties. Interacts with KCNE4; impairs KCNQ1 localization in lipid rafts and inhibits voltage-gated potassium channel activity. Interacts with KCNE5; impairs KCNQ1 localization in lipid rafts and only conducts current upon strong and continued depolarization. Expressed only in rectal gland and heart. Faintly expressed in intestine. Undetectable in kidney, brain, testis, liver and gills.

It localises to the cell membrane. The protein resides in the cytoplasmic vesicle membrane. It is found in the membrane raft. The protein localises to the endoplasmic reticulum. Its subcellular location is the basolateral cell membrane. The catalysed reaction is K(+)(in) = K(+)(out). Its activity is regulated as follows. PIP2 molecule is essential to activate KCNQ channels by inducing the coupling of the voltage-sensing domain (VSD) and the pore-forming domain (PD). Upon channel activation, PIP2 disrupts the VSD-calmodulin/CALM interactions, causing the release of CALM from the VSD which triggers the opening of the gate. Calcium potentiates KCNQ1 channel current through calcium-bound CALM. Calcium-bound CALM competes with PIP2 to stabilize the channel open state. Functionally, pore-forming subunit of the voltage-gated potassium (Kv) channel involved in the regulation of cardiomyocyte excitability and important in normal development and functions of myocardium, inner ear, stomach and colon. Associates with KCNE beta subunits that modulates current kinetics. Induces a voltage-dependent by rapidly activating and slowly deactivating potassium-selective outward current. Also promotes a delayed voltage activated potassium current showing outward rectification characteristic. During beta-adrenergic receptor stimulation participates in cardiac repolarization by associating with KCNE1 to form the I(Ks) cardiac potassium current that increases the amplitude and slows down the activation kinetics of outward potassium current I(Ks). When associated with KCNE3, forms the potassium channel that is important for cyclic AMP-stimulated intestinal secretion of chloride ions. When associated with KCNE2, forms a heterooligomer complex leading to currents with an apparently instantaneous activation, a rapid deactivation process and a linear current-voltage relationship and decreases the amplitude of the outward current. When associated with KCNE4, inhibits voltage-gated potassium channel activity. When associated with KCNE5, this complex only conducts current upon strong and continued depolarization. In Squalus acanthias (Spiny dogfish), this protein is Potassium voltage-gated channel subfamily KQT member 1.